A 318-amino-acid polypeptide reads, in one-letter code: Homeobox protein Nkx-2.5 (318 aa).

Positions 137–196 form a DNA-binding region, homeobox; it reads RRKPRVLFSQAQVYELERRFKQQRYLSAPERDQLASVLKLTSTQVKIWFQNRRYKCKRQR.

It belongs to the NK-2 homeobox family. In terms of assembly, homodimer (via the homeobox); binds DNA as homodimer. Interacts (via the homeobox) with TBX5 (via the T-box); this complex binds DNA. Interacts with HIPK1 and HIPK2, but not HIPK3. Interacts with the C-terminal zinc finger of GATA4 through its homeobox domain. Also interacts with JARID2 which represses its ability to activate transcription of ANF. Interacts with FBLIM1. Interacts with TBX18. Interacts with histone methyltransferase NSD2 (via HMG box). Interacts with NEDD9. Interacts with TBX1. In terms of tissue distribution, predominantly in the adult and embryonic heart, and to a lesser extent in lingual muscle, spleen and stomach.

It is found in the nucleus. In terms of biological role, transcription factor required for the development of the heart and the spleen. During heart development, acts as a transcriptional activator of NPPA/ANF in cooperation with GATA4. May cooperate with TBX2 to negatively modulate expression of NPPA/ANF in the atrioventricular canal. Binds to the core DNA motif of NPPA promoter. Together with PBX1, required for spleen development through a mechanism that involves CDKN2B repression. Positively regulates transcription of genes such as COL3A1 and MMP2, resulting in increased pulmonary endothelial fibrosis in response to hypoxia. The polypeptide is Homeobox protein Nkx-2.5 (Nkx2-5) (Mus musculus (Mouse)).